Here is a 293-residue protein sequence, read N- to C-terminus: MAWIQIRLNSTNERAEAISDFLEELGSVSVTFMDSQDTPIFEPLPGETRLWGNTDVIALFDAETEMQPVLTALRQSGLLEEGFAYKIEQIEDKDWEREWMDNFHPMQFGKRLWICPSWREIPDPNAVNVMLDPGLAFGTGTHPTTALCLEWLDGLDLTGKTVIDFGCGSGILAIAALKLGAKNAIGIDIDPQAILASGSNAQANGVADRLQLFLSDRQPADLKADVVVANILAGPLKELYPVISQLVKPKGDLGLSGILKTQAASVCEAYAQTFELEPVAVREEWCRITGKLA.

Threonine 145, glycine 166, aspartate 188, and asparagine 230 together coordinate S-adenosyl-L-methionine.

This sequence belongs to the methyltransferase superfamily. PrmA family.

Its subcellular location is the cytoplasm. It catalyses the reaction L-lysyl-[protein] + 3 S-adenosyl-L-methionine = N(6),N(6),N(6)-trimethyl-L-lysyl-[protein] + 3 S-adenosyl-L-homocysteine + 3 H(+). Its function is as follows. Methylates ribosomal protein L11. The chain is Ribosomal protein L11 methyltransferase from Actinobacillus succinogenes (strain ATCC 55618 / DSM 22257 / CCUG 43843 / 130Z).